A 248-amino-acid chain; its full sequence is Triosephosphate isomerase (248 aa).

Asn9–Lys11 contacts substrate. Residue His94 is the Electrophile of the active site. The active-site Proton acceptor is Glu166. Substrate contacts are provided by residues Gly172, Ser212, and Gly233 to Gly234.

It belongs to the triosephosphate isomerase family. As to quaternary structure, homodimer.

The protein localises to the cytoplasm. The catalysed reaction is D-glyceraldehyde 3-phosphate = dihydroxyacetone phosphate. It functions in the pathway carbohydrate biosynthesis; gluconeogenesis. The protein operates within carbohydrate degradation; glycolysis; D-glyceraldehyde 3-phosphate from glycerone phosphate: step 1/1. Functionally, involved in the gluconeogenesis. Catalyzes stereospecifically the conversion of dihydroxyacetone phosphate (DHAP) to D-glyceraldehyde-3-phosphate (G3P). This Caldanaerobacter subterraneus subsp. tengcongensis (strain DSM 15242 / JCM 11007 / NBRC 100824 / MB4) (Thermoanaerobacter tengcongensis) protein is Triosephosphate isomerase.